We begin with the raw amino-acid sequence, 312 residues long: Pectin lyase (312 aa).

The active site involves arginine 201. The interval 254 to 274 (GSGTFTDTNSVPPITNQKSPK) is disordered. A compositionally biased stretch (polar residues) spans 256–274 (GTFTDTNSVPPITNQKSPK).

Belongs to the polysaccharide lyase 1 family.

It carries out the reaction Eliminative cleavage of (1-&gt;4)-alpha-D-galacturonan methyl ester to give oligosaccharides with 4-deoxy-6-O-methyl-alpha-D-galact-4-enuronosyl groups at their non-reducing ends.. This Pseudomonas marginalis (Pseudomonas panacis) protein is Pectin lyase (pnl).